Here is a 224-residue protein sequence, read N- to C-terminus: ATP phosphoribosyltransferase (224 aa).

This sequence belongs to the ATP phosphoribosyltransferase family. Short subfamily. In terms of assembly, heteromultimer composed of HisG and HisZ subunits.

The protein resides in the cytoplasm. It carries out the reaction 1-(5-phospho-beta-D-ribosyl)-ATP + diphosphate = 5-phospho-alpha-D-ribose 1-diphosphate + ATP. It functions in the pathway amino-acid biosynthesis; L-histidine biosynthesis; L-histidine from 5-phospho-alpha-D-ribose 1-diphosphate: step 1/9. Its function is as follows. Catalyzes the condensation of ATP and 5-phosphoribose 1-diphosphate to form N'-(5'-phosphoribosyl)-ATP (PR-ATP). Has a crucial role in the pathway because the rate of histidine biosynthesis seems to be controlled primarily by regulation of HisG enzymatic activity. This Cupriavidus metallidurans (strain ATCC 43123 / DSM 2839 / NBRC 102507 / CH34) (Ralstonia metallidurans) protein is ATP phosphoribosyltransferase.